A 731-amino-acid polypeptide reads, in one-letter code: 1,4-alpha-glucan branching enzyme GlgB (731 aa).

The Nucleophile role is filled by D411. The active-site Proton donor is E464.

It belongs to the glycosyl hydrolase 13 family. GlgB subfamily. In terms of assembly, monomer.

The catalysed reaction is Transfers a segment of a (1-&gt;4)-alpha-D-glucan chain to a primary hydroxy group in a similar glucan chain.. Its pathway is glycan biosynthesis; glycogen biosynthesis. Functionally, catalyzes the formation of the alpha-1,6-glucosidic linkages in glycogen by scission of a 1,4-alpha-linked oligosaccharide from growing alpha-1,4-glucan chains and the subsequent attachment of the oligosaccharide to the alpha-1,6 position. This is 1,4-alpha-glucan branching enzyme GlgB from Mycolicibacterium paratuberculosis (strain ATCC BAA-968 / K-10) (Mycobacterium paratuberculosis).